Here is a 151-residue protein sequence, read N- to C-terminus: Cell division protein SepF (151 aa).

The segment at 31–53 is disordered; sequence EEVEEPRRRSRTGVKQERETGQN.

It belongs to the SepF family. In terms of assembly, homodimer. Interacts with FtsZ.

It is found in the cytoplasm. Cell division protein that is part of the divisome complex and is recruited early to the Z-ring. Probably stimulates Z-ring formation, perhaps through the cross-linking of FtsZ protofilaments. Its function overlaps with FtsA. The sequence is that of Cell division protein SepF from Halalkalibacterium halodurans (strain ATCC BAA-125 / DSM 18197 / FERM 7344 / JCM 9153 / C-125) (Bacillus halodurans).